We begin with the raw amino-acid sequence, 151 residues long: Probable cGMP 3',5'-cyclic phosphodiesterase subunit delta (151 aa).

The protein belongs to the PDE6D/unc-119 family. In terms of assembly, interacts with Pde6.

The protein resides in the nucleus. Its subcellular location is the cytoplasm. In Aedes aegypti (Yellowfever mosquito), this protein is Probable cGMP 3',5'-cyclic phosphodiesterase subunit delta.